The sequence spans 505 residues: Deoxyguanosinetriphosphate triphosphohydrolase (505 aa).

An HD domain is found at Arg66–Cys273.

This sequence belongs to the dGTPase family. Type 1 subfamily. As to quaternary structure, homotetramer. Mg(2+) serves as cofactor.

It carries out the reaction dGTP + H2O = 2'-deoxyguanosine + triphosphate + H(+). Its function is as follows. dGTPase preferentially hydrolyzes dGTP over the other canonical NTPs. This is Deoxyguanosinetriphosphate triphosphohydrolase from Escherichia coli O139:H28 (strain E24377A / ETEC).